The following is a 745-amino-acid chain: Copper-transporting ATPase (745 aa).

One can recognise an HMA domain in the interval 1–67 (MKESFYIEGM…LIEKLGYSPK (67 aa)). The Cytoplasmic portion of the chain corresponds to 1-83 (MKESFYIEGM…KKEFFSPNVK (83 aa)). The Cu cation site is built by cysteine 12 and cysteine 15. The helical transmembrane segment at 84-104 (LALAVIFTLFVVYLSMGAMLS) threads the bilayer. Topologically, residues 105–124 (PSLLPESLLTINHHSNFLNA) are extracellular. A helical membrane pass occupies residues 125–144 (CLQLIGALIVMHLGRDFYIQ). At 145-151 (GFKALWH) the chain is on the cytoplasmic side. Residues 152-172 (RQPNMSSLIAIGTSAALISSL) form a helical membrane-spanning segment. The Extracellular segment spans residues 173–194 (WQLYLVYTNHYTDQWSYGHYYF). The chain crosses the membrane as a helical span at residues 195–215 (ESVCVILMFVMVGKRIENVSK). At 216–343 (DKALDAMQAL…KAEISRLADK (128 aa)) the chain is on the cytoplasmic side. The helical transmembrane segment at 344–366 (VSSVFVPSVIAIAVLAFVVWLII) threads the bilayer. The Extracellular portion of the chain corresponds to 367-379 (APKPDFWWNFRTA). A helical transmembrane segment spans residues 380–397 (LEVFVSVLVISCPCALGL). The Cytoplasmic portion of the chain corresponds to 398–685 (ATPMSILVAN…KLSQATIKNI (288 aa)). Residue aspartate 435 is the 4-aspartylphosphate intermediate of the active site. Residues aspartate 631 and aspartate 635 each coordinate Mg(2+). Residues 686–705 (KENLFWAFCYNSVFIPLACG) form a helical membrane-spanning segment. Topologically, residues 706 to 716 (VLYKANIMLSP) are extracellular. A helical membrane pass occupies residues 717 to 735 (AIAGLAMSLSSVSVVLNSQ). Over 736–745 (RLRNFKIKDH) the chain is Cytoplasmic.

The protein belongs to the cation transport ATPase (P-type) (TC 3.A.3) family. Type IB subfamily.

The protein resides in the cell membrane. The enzyme catalyses Cu(2+)(in) + ATP + H2O = Cu(2+)(out) + ADP + phosphate + H(+). In terms of biological role, probably involved in copper export. The chain is Copper-transporting ATPase (copA) from Helicobacter pylori (strain J99 / ATCC 700824) (Campylobacter pylori J99).